A 412-amino-acid polypeptide reads, in one-letter code: MRLASSSTSLPVPAAGHHPLPLTVGVLGSGHAGTALAAWFASRHVSTALWAPADHPGSISAIKANEGVVTTEGVINGSFTVSASDDLLAVIRSSHLLIIVTRADVHDSFVSELANFNGELAEKDILVVCGHGFSMKYERQLQCKRILETDNSPTTSKLSDKKKCKVNIKEMKASFGLSCFPIHRNDVGVIDLPEDIKIIFAQLFTARIIPIPPLQVLFFSNYITHAVAAVMNIGSVRDPVNSLTKRAEQWLLELDERTPRAETGFFFYGEGSNTYVCKVQEQIDQERRKVAKACGLHLNSLLQECNDEYGTDYATLREYCLAPSPHNVHYACPDNMEHRYFSEELCSLEDIAAIATITKIEMPLTRAFINIIHAGKGNFPPTDKTSSVIGNFRSGDLIRFGATIFVKDEKMK.

Belongs to the lysopine/nopaline/octopine/opine/vitopine dehydrogenases family. Homotetramer.

It carries out the reaction D-nopaline + NADP(+) + H2O = L-arginine + 2-oxoglutarate + NADPH + H(+). The chain is D-nopaline dehydrogenase (nos) from Agrobacterium vitis (Rhizobium vitis).